A 105-amino-acid chain; its full sequence is UPF0235 protein Mchl_2407 (105 aa).

Belongs to the UPF0235 family.

The sequence is that of UPF0235 protein Mchl_2407 from Methylorubrum extorquens (strain CM4 / NCIMB 13688) (Methylobacterium extorquens).